The chain runs to 193 residues: Xanthine phosphoribosyltransferase (193 aa).

Xanthine contacts are provided by Leu-20 and Thr-27. 128–132 provides a ligand contact to 5-phospho-alpha-D-ribose 1-diphosphate; sequence ANGQA. Xanthine is bound at residue Lys-156.

This sequence belongs to the purine/pyrimidine phosphoribosyltransferase family. Xpt subfamily. As to quaternary structure, homodimer.

The protein resides in the cytoplasm. The enzyme catalyses XMP + diphosphate = xanthine + 5-phospho-alpha-D-ribose 1-diphosphate. It participates in purine metabolism; XMP biosynthesis via salvage pathway; XMP from xanthine: step 1/1. Its function is as follows. Converts the preformed base xanthine, a product of nucleic acid breakdown, to xanthosine 5'-monophosphate (XMP), so it can be reused for RNA or DNA synthesis. The sequence is that of Xanthine phosphoribosyltransferase from Streptococcus pneumoniae serotype 19F (strain G54).